The following is a 369-amino-acid chain: Molybdenum import ATP-binding protein ModC (369 aa).

One can recognise an ABC transporter domain in the interval 4 to 239 (LQLRAVVADR…PRSRFGARIA (236 aa)). ATP is bound at residue 31–38 (GPNGAGKS). Residues 293-361 (HGSPRNIVGL…VKAQEVALHP (69 aa)) form the Mop domain.

This sequence belongs to the ABC transporter superfamily. Molybdate importer (TC 3.A.1.8) family. As to quaternary structure, the complex is composed of two ATP-binding proteins (ModC), two transmembrane proteins (ModB) and a solute-binding protein (ModA).

The protein localises to the cell membrane. It catalyses the reaction molybdate(out) + ATP + H2O = molybdate(in) + ADP + phosphate + H(+). Its function is as follows. Part of the ABC transporter complex ModABC involved in molybdenum import. Responsible for energy coupling to the transport system. This Mycobacterium tuberculosis (strain CDC 1551 / Oshkosh) protein is Molybdenum import ATP-binding protein ModC.